We begin with the raw amino-acid sequence, 338 residues long: Fructose-1,6-bisphosphatase class 1 (338 aa).

Mg(2+) contacts are provided by glutamate 92, aspartate 115, leucine 117, and aspartate 118. Residues 118–121, asparagine 211, tyrosine 244, 262–264, and lysine 274 each bind substrate; these read DGSS and YLY. A Mg(2+)-binding site is contributed by glutamate 280.

It belongs to the FBPase class 1 family. In terms of assembly, homotetramer. It depends on Mg(2+) as a cofactor.

The protein localises to the cytoplasm. It carries out the reaction beta-D-fructose 1,6-bisphosphate + H2O = beta-D-fructose 6-phosphate + phosphate. It participates in carbohydrate biosynthesis; gluconeogenesis. This Vibrio parahaemolyticus serotype O3:K6 (strain RIMD 2210633) protein is Fructose-1,6-bisphosphatase class 1.